An 819-amino-acid polypeptide reads, in one-letter code: Lysine-specific demethylase JMJ18 (819 aa).

A disordered region spans residues 1 to 39; the sequence is MENPPLESEIKEDMSLKNHPPDKDKDKDTIMEQPSSPRH. Residues 8 to 30 show a composition bias toward basic and acidic residues; the sequence is SEIKEDMSLKNHPPDKDKDKDTI. A JmjN domain is found at 59-100; it reads APVFTPSLEEFVDPLAYIEKIRPLAEPYGICRIIPPSTWKPP. Residues 120–171 form a disordered region; sequence TVDLLQNREPMKKKPKSRKRKRRRNSRMGSSKRRSGSSPAESTSSPEAEEKF. Positions 130–137 match the Nuclear localization signal motif; that stretch reads MKKKPKSR. The segment covering 130–154 has biased composition (basic residues); the sequence is MKKKPKSRKRKRRRNSRMGSSKRRS. Low complexity predominate over residues 155 to 165; the sequence is GSSPAESTSSP. The JmjC domain occupies 261-427; the sequence is QYTLSGWNLN…HGQNAVELYS (167 aa). 3 residues coordinate Fe cation: His307, Glu309, and His395. Cys519, Cys522, Cys533, Cys535, Cys542, His545, Cys550, and Cys552 together coordinate Zn(2+). Residues 519–571 form a C5HC2 zinc finger; the sequence is CFSCFYDLHLSASGCKCSPEEYACLKHADDLCSCDVKDGFILLRYTMDELSSL. The FYR N-terminal domain maps to 644–702; the sequence is ASENLGVSVEPINLGFLIFGKLWCNKYAIFPKGFRSRVKFYNVLDPTRMSNYISEVLDA. An FYR C-terminal domain is found at 704–788; it reads LMGPLFRVTL…HRLVEYWNHK (85 aa).

The protein belongs to the JARID1 histone demethylase family. Requires Fe(2+) as cofactor. Expressed in vascular tissues of roots, cotyledons, leaves and flowers. Expressed predominantly in phloem companion cells of roots. Present in inflorescences, roots, siliques, leaves and stems.

It localises to the nucleus. The enzyme catalyses N(6),N(6),N(6)-trimethyl-L-lysyl(4)-[histone H3] + 2-oxoglutarate + O2 = N(6),N(6)-dimethyl-L-lysyl(4)-[histone H3] + formaldehyde + succinate + CO2. It catalyses the reaction N(6),N(6)-dimethyl-L-lysyl(4)-[histone H3] + 2-oxoglutarate + O2 = N(6)-methyl-L-lysyl(4)-[histone H3] + formaldehyde + succinate + CO2. Its function is as follows. Histone demethylase that demethylates 'Lys-4' (H3K4me) of histone H3 with a specific activity for H3K4me3 and H3K4me2. No activity on H3K9me3/2, H3K27me3/2 and H3K36me3/2. Involved in the control of flowering time by demethylating H3K4me3 at the FLC locus and repressing its expression. The repression of FLC level and reduction in H3K4me3 at the FLC locus results in induction of the flowering activator FT, which is a downstream target of FLC. The chain is Lysine-specific demethylase JMJ18 from Arabidopsis thaliana (Mouse-ear cress).